Consider the following 436-residue polypeptide: Histidine--tRNA ligase (436 aa).

Belongs to the class-II aminoacyl-tRNA synthetase family. Homodimer.

It is found in the cytoplasm. The enzyme catalyses tRNA(His) + L-histidine + ATP = L-histidyl-tRNA(His) + AMP + diphosphate + H(+). This Prochlorococcus marinus (strain MIT 9313) protein is Histidine--tRNA ligase.